We begin with the raw amino-acid sequence, 399 residues long: Insertion element IS116 uncharacterized 44.8 kDa protein (399 aa).

Belongs to the transposase IS1111A/IS1328/IS1533 family.

The sequence is that of Insertion element IS116 uncharacterized 44.8 kDa protein from Streptomyces clavuligerus.